A 539-amino-acid polypeptide reads, in one-letter code: T-complex protein 1 subunit zeta (539 aa).

The protein belongs to the TCP-1 chaperonin family. In terms of assembly, heterooligomeric complex of about 850 to 900 kDa that forms two stacked rings, 12 to 16 nm in diameter.

It localises to the cytoplasm. Molecular chaperone; assists the folding of proteins upon ATP hydrolysis. Known to play a role, in vitro, in the folding of actin and tubulin. This Caenorhabditis elegans protein is T-complex protein 1 subunit zeta (cct-6).